An 856-amino-acid chain; its full sequence is DNA mismatch repair protein MutS (856 aa).

618 to 625 (GPNMGGKS) contacts ATP.

Belongs to the DNA mismatch repair MutS family.

Functionally, this protein is involved in the repair of mismatches in DNA. It is possible that it carries out the mismatch recognition step. This protein has a weak ATPase activity. In Shewanella baltica (strain OS185), this protein is DNA mismatch repair protein MutS.